The sequence spans 886 residues: Alanine--tRNA ligase (886 aa).

Residues histidine 568, histidine 572, cysteine 670, and histidine 674 each contribute to the Zn(2+) site.

This sequence belongs to the class-II aminoacyl-tRNA synthetase family. Zn(2+) serves as cofactor.

Its subcellular location is the cytoplasm. The enzyme catalyses tRNA(Ala) + L-alanine + ATP = L-alanyl-tRNA(Ala) + AMP + diphosphate. Functionally, catalyzes the attachment of alanine to tRNA(Ala) in a two-step reaction: alanine is first activated by ATP to form Ala-AMP and then transferred to the acceptor end of tRNA(Ala). Also edits incorrectly charged Ser-tRNA(Ala) and Gly-tRNA(Ala) via its editing domain. In Prochlorococcus marinus (strain NATL2A), this protein is Alanine--tRNA ligase.